Reading from the N-terminus, the 92-residue chain is UPF0223 protein SERP0684 (92 aa).

This sequence belongs to the UPF0223 family.

The polypeptide is UPF0223 protein SERP0684 (Staphylococcus epidermidis (strain ATCC 35984 / DSM 28319 / BCRC 17069 / CCUG 31568 / BM 3577 / RP62A)).